Consider the following 329-residue polypeptide: 3-isopropylmalate dehydrogenase (329 aa).

Residues R83, R93, R114, and D200 each contribute to the substrate site. 3 residues coordinate Mg(2+): D200, D224, and D228. NAD(+) is bound at residue 257-269 (GSAPQIAGKNIAN).

This sequence belongs to the isocitrate and isopropylmalate dehydrogenases family. In terms of assembly, homotetramer. The cofactor is Mg(2+). Requires Mn(2+) as cofactor.

It localises to the cytoplasm. The catalysed reaction is (2R,3S)-3-isopropylmalate + NAD(+) = 4-methyl-2-oxopentanoate + CO2 + NADH. It functions in the pathway amino-acid biosynthesis; L-leucine biosynthesis; L-leucine from 3-methyl-2-oxobutanoate: step 3/4. In terms of biological role, catalyzes the oxidation of 3-carboxy-2-hydroxy-4-methylpentanoate (3-isopropylmalate) to 3-carboxy-4-methyl-2-oxopentanoate. The product decarboxylates to 4-methyl-2 oxopentanoate. This is 3-isopropylmalate dehydrogenase (leuB) from Methanothermobacter thermautotrophicus (strain ATCC 29096 / DSM 1053 / JCM 10044 / NBRC 100330 / Delta H) (Methanobacterium thermoautotrophicum).